The chain runs to 201 residues: Ribonuclease HII (201 aa).

The RNase H type-2 domain maps to 12–201 (GIVCGIDEVG…FAPVAQYMLF (190 aa)). A divalent metal cation is bound by residues aspartate 18, glutamate 19, and aspartate 113.

Belongs to the RNase HII family. It depends on Mn(2+) as a cofactor. Mg(2+) is required as a cofactor.

The protein localises to the cytoplasm. The catalysed reaction is Endonucleolytic cleavage to 5'-phosphomonoester.. Functionally, endonuclease that specifically degrades the RNA of RNA-DNA hybrids. This Paramagnetospirillum magneticum (strain ATCC 700264 / AMB-1) (Magnetospirillum magneticum) protein is Ribonuclease HII (rnhB).